The following is a 190-amino-acid chain: Small ribosomal subunit protein eS7B (190 aa).

An N-acetylserine modification is found at Ser-2. Residues Ser-10 and Ser-31 each carry the phosphoserine modification. Residues Lys-83 and Lys-84 each participate in a glycyl lysine isopeptide (Lys-Gly) (interchain with G-Cter in ubiquitin) cross-link.

It belongs to the eukaryotic ribosomal protein eS7 family. Component of the small ribosomal subunit (SSU). Mature yeast ribosomes consist of a small (40S) and a large (60S) subunit. The 40S small subunit contains 1 molecule of ribosomal RNA (18S rRNA) and 33 different proteins (encoded by 57 genes). The large 60S subunit contains 3 rRNA molecules (25S, 5.8S and 5S rRNA) and 46 different proteins (encoded by 81 genes). Interacts with snoRNA U3. uS11 interacts with MPP10. Component of the ribosomal small subunit (SSU) processome composed of at least 40 protein subunits and snoRNA U3. Post-translationally, N-terminally acetylated by acetyltransferase NatA. In terms of processing, ubiquitinated at Lys-83 and Lys-84 in response to stalled ribosomes, leading to activation of the No-Go Decay (NGD) pathway: first monoubiquitinated by MOT2/NOT4, followed by formation by HEL2 of 'Lys-63'-linked polyubiquitin chains on monoubiquitin.

It localises to the cytoplasm. The protein resides in the nucleus. The protein localises to the nucleolus. Component of the ribosome, a large ribonucleoprotein complex responsible for the synthesis of proteins in the cell. The small ribosomal subunit (SSU) binds messenger RNAs (mRNAs) and translates the encoded message by selecting cognate aminoacyl-transfer RNA (tRNA) molecules. The large subunit (LSU) contains the ribosomal catalytic site termed the peptidyl transferase center (PTC), which catalyzes the formation of peptide bonds, thereby polymerizing the amino acids delivered by tRNAs into a polypeptide chain. The nascent polypeptides leave the ribosome through a tunnel in the LSU and interact with protein factors that function in enzymatic processing, targeting, and the membrane insertion of nascent chains at the exit of the ribosomal tunnel. eS7 is involved in nucleolar processing of pre-18S ribosomal RNA and ribosome assembly. In Saccharomyces cerevisiae (strain ATCC 204508 / S288c) (Baker's yeast), this protein is Small ribosomal subunit protein eS7B.